Reading from the N-terminus, the 79-residue chain is Conotoxin ArMSGL-0122 (79 aa).

Positions 1-20 (MSRLGIMVLTLLLLVFIVTS) are cleaved as a signal peptide. Positions 21–44 (HQDAGEKQATQRAAINFRWKRSLT) are excised as a propeptide. Cystine bridges form between Cys-52-Cys-64, Cys-56-Cys-73, and Cys-63-Cys-77. A Leucine amide modification is found at Leu-78.

Belongs to the conotoxin O3 superfamily. Expressed by the venom duct.

The protein resides in the secreted. The polypeptide is Conotoxin ArMSGL-0122 (Conus arenatus (Sand-dusted cone)).